Reading from the N-terminus, the 476-residue chain is Cytochrome P450 6B5 (476 aa).

Cysteine 443 provides a ligand contact to heme.

This sequence belongs to the cytochrome P450 family. It depends on heme as a cofactor.

Its subcellular location is the endoplasmic reticulum membrane. The protein resides in the microsome membrane. It catalyses the reaction an organic molecule + reduced [NADPH--hemoprotein reductase] + O2 = an alcohol + oxidized [NADPH--hemoprotein reductase] + H2O + H(+). Enables the insect to feed on furanocoumarin-producing plants and evolved as an adaptation for detoxification of xanthotoxin and other furanocoumarins. The polypeptide is Cytochrome P450 6B5 (CYP6B5) (Papilio glaucus (Eastern tiger swallowtail butterfly)).